Consider the following 101-residue polypeptide: NAD(P)H-quinone oxidoreductase subunit 4L, chloroplastic (101 aa).

3 helical membrane passes run 2-22 (MLEY…YGLI), 32-52 (MCLE…SYFF), and 61-81 (IFSI…LAIV).

It belongs to the complex I subunit 4L family. In terms of assembly, NDH is composed of at least 16 different subunits, 5 of which are encoded in the nucleus.

It is found in the plastid. Its subcellular location is the chloroplast thylakoid membrane. It carries out the reaction a plastoquinone + NADH + (n+1) H(+)(in) = a plastoquinol + NAD(+) + n H(+)(out). The catalysed reaction is a plastoquinone + NADPH + (n+1) H(+)(in) = a plastoquinol + NADP(+) + n H(+)(out). Its function is as follows. NDH shuttles electrons from NAD(P)H:plastoquinone, via FMN and iron-sulfur (Fe-S) centers, to quinones in the photosynthetic chain and possibly in a chloroplast respiratory chain. The immediate electron acceptor for the enzyme in this species is believed to be plastoquinone. Couples the redox reaction to proton translocation, and thus conserves the redox energy in a proton gradient. The polypeptide is NAD(P)H-quinone oxidoreductase subunit 4L, chloroplastic (Ipomoea purpurea (Common morning glory)).